A 158-amino-acid chain; its full sequence is Transcription elongation factor GreA (158 aa).

Positions 5-75 (EKLPMLAEGY…DLEDRVSRAQ (71 aa)) form a coiled coil.

Belongs to the GreA/GreB family.

Necessary for efficient RNA polymerase transcription elongation past template-encoded arresting sites. The arresting sites in DNA have the property of trapping a certain fraction of elongating RNA polymerases that pass through, resulting in locked ternary complexes. Cleavage of the nascent transcript by cleavage factors such as GreA or GreB allows the resumption of elongation from the new 3'terminus. GreA releases sequences of 2 to 3 nucleotides. This Novosphingobium aromaticivorans (strain ATCC 700278 / DSM 12444 / CCUG 56034 / CIP 105152 / NBRC 16084 / F199) protein is Transcription elongation factor GreA.